Reading from the N-terminus, the 311-residue chain is Exosome complex component Rrp4 (311 aa).

One can recognise an S1 motif domain in the interval 63 to 131; sequence GDVVIGEITD…EVKKVKLGLK (69 aa). A KH domain is found at 139–197; sequence RDGILVYITPTKVPRLIGKRGSMINMVKEKTHCDIVVGQNGVVWIKGEPDMERIAEKVV. The disordered stretch occupies residues 222-311; sequence GVEPEIQVEE…EVKDENNSER (90 aa). Over residues 241–300 the composition is skewed to acidic residues; that stretch reads PESEDFEEASDYSEDVEVSPESEDIEEVSDESEDLEVESEDVEEGTDTPAAEEDDGEAGD. Basic and acidic residues predominate over residues 301 to 311; that stretch reads AEVKDENNSER.

Belongs to the RRP4 family. As to quaternary structure, component of the archaeal exosome complex. Forms a trimer of Rrp4 and/or Csl4 subunits. The trimer associates with a hexameric ring-like arrangement composed of 3 Rrp41-Rrp42 heterodimers.

The protein localises to the cytoplasm. In terms of biological role, non-catalytic component of the exosome, which is a complex involved in RNA degradation. Increases the RNA binding and the efficiency of RNA degradation. Confers strong poly(A) specificity to the exosome. This chain is Exosome complex component Rrp4, found in Methanothermobacter thermautotrophicus (strain ATCC 29096 / DSM 1053 / JCM 10044 / NBRC 100330 / Delta H) (Methanobacterium thermoautotrophicum).